The chain runs to 336 residues: MKLAIIAGDGIGPEVTAEAVKVLDAVVPGVQKTSYDLGARRFHATGEVLPDSVVAELRNHDAILLGAIGDPSVPSGVLERGLLLRLRFELDHHINLRPARLYPGVASPLSGNPGIDFVVVREGTEGPYTGNGGAIRVGTPNEVATEVSVNTAFGVRRVVADAFERARRRRKHLTLVHKTNVLTFAGGLWLRTVDEVGECYPDVEVAYQHVDAATIHMITDPGRFDVIVTDNLFGDIITDLAAAVCGGIGLAASGNIDATRANPSMFEPVHGSAPDIAGQGIADPTAAIMSVALLLSHLGEHDAAARVDRAVEAHLATRGSERLATSDVGERIAAAL.

Positions 87, 97, 121, and 211 each coordinate substrate. Positions 211, 235, and 239 each coordinate Mg(2+). 271-283 is a binding site for NAD(+); the sequence is GSAPDIAGQGIAD.

Belongs to the isocitrate and isopropylmalate dehydrogenases family. LeuB type 2 subfamily. Homodimer. Mg(2+) is required as a cofactor. The cofactor is Mn(2+).

It is found in the cytoplasm. It carries out the reaction (2R,3S)-3-isopropylmalate + NAD(+) = 4-methyl-2-oxopentanoate + CO2 + NADH. The protein operates within amino-acid biosynthesis; L-leucine biosynthesis; L-leucine from 3-methyl-2-oxobutanoate: step 3/4. Functionally, catalyzes the oxidation of 3-carboxy-2-hydroxy-4-methylpentanoate (3-isopropylmalate) to 3-carboxy-4-methyl-2-oxopentanoate. The product decarboxylates to 4-methyl-2 oxopentanoate. This chain is 3-isopropylmalate dehydrogenase (leuB), found in Mycobacterium tuberculosis (strain CDC 1551 / Oshkosh).